We begin with the raw amino-acid sequence, 217 residues long: Adenylate kinase (217 aa).

Residue 10–15 (GAGKGT) participates in ATP binding. Positions 30 to 59 (STGDMFRAAMKEETDLGLEAKSYIDKGELV) are NMP. AMP is bound by residues Thr31, Arg36, 57–59 (ELV), 85–88 (GFPR), and Gln92. Positions 126-163 (GRRICKNCGATYHLVFNPPAKENVCDKCGGELYQREDD) are LID. Arg127 provides a ligand contact to ATP. Residues Cys130 and Cys133 each coordinate Zn(2+). Residue 136-137 (TY) participates in ATP binding. 2 residues coordinate Zn(2+): Cys150 and Cys153. AMP contacts are provided by Arg160 and Arg171. Lys199 provides a ligand contact to ATP.

This sequence belongs to the adenylate kinase family. As to quaternary structure, monomer.

The protein resides in the cytoplasm. It carries out the reaction AMP + ATP = 2 ADP. The protein operates within purine metabolism; AMP biosynthesis via salvage pathway; AMP from ADP: step 1/1. In terms of biological role, catalyzes the reversible transfer of the terminal phosphate group between ATP and AMP. Plays an important role in cellular energy homeostasis and in adenine nucleotide metabolism. The chain is Adenylate kinase from Bacillus licheniformis (strain ATCC 14580 / DSM 13 / JCM 2505 / CCUG 7422 / NBRC 12200 / NCIMB 9375 / NCTC 10341 / NRRL NRS-1264 / Gibson 46).